The sequence spans 227 residues: ATP synthase F(0) complex subunit a (227 aa).

The next 6 membrane-spanning stretches (helical) occupy residues leucine 14–proline 34, tryptophan 69–leucine 89, glutamine 98–leucine 118, isoleucine 139–valine 159, leucine 174–alanine 194, and valine 196–valine 216.

The protein belongs to the ATPase A chain family. Component of the ATP synthase complex composed at least of ATP5F1A/subunit alpha, ATP5F1B/subunit beta, ATP5MC1/subunit c (homooctomer), MT-ATP6/subunit a, MT-ATP8/subunit 8, ATP5ME/subunit e, ATP5MF/subunit f, ATP5MG/subunit g, ATP5MK/subunit k, ATP5MJ/subunit j, ATP5F1C/subunit gamma, ATP5F1D/subunit delta, ATP5F1E/subunit epsilon, ATP5PF/subunit F6, ATP5PB/subunit b, ATP5PD/subunit d, ATP5PO/subunit OSCP. ATP synthase complex consists of a soluble F(1) head domain (subunits alpha(3) and beta(3)) - the catalytic core - and a membrane F(0) domain - the membrane proton channel (subunits c, a, 8, e, f, g, k and j). These two domains are linked by a central stalk (subunits gamma, delta, and epsilon) rotating inside the F1 region and a stationary peripheral stalk (subunits F6, b, d, and OSCP). Interacts with DNAJC30; interaction is direct.

Its subcellular location is the mitochondrion inner membrane. The enzyme catalyses H(+)(in) = H(+)(out). In terms of biological role, subunit a, of the mitochondrial membrane ATP synthase complex (F(1)F(0) ATP synthase or Complex V) that produces ATP from ADP in the presence of a proton gradient across the membrane which is generated by electron transport complexes of the respiratory chain. ATP synthase complex consist of a soluble F(1) head domain - the catalytic core - and a membrane F(1) domain - the membrane proton channel. These two domains are linked by a central stalk rotating inside the F(1) region and a stationary peripheral stalk. During catalysis, ATP synthesis in the catalytic domain of F(1) is coupled via a rotary mechanism of the central stalk subunits to proton translocation. With the subunit c (ATP5MC1), forms the proton-conducting channel in the F(0) domain, that contains two crucial half-channels (inlet and outlet) that facilitate proton movement from the mitochondrial intermembrane space (IMS) into the matrix. Protons are taken up via the inlet half-channel and released through the outlet half-channel, following a Grotthuss mechanism. The sequence is that of ATP synthase F(0) complex subunit a from Struthio camelus (Common ostrich).